We begin with the raw amino-acid sequence, 195 residues long: Interferon tau-2 (195 aa).

The signal sequence occupies residues 1–23 (MAFVLSLLMALVLVSYGPGGSLG). Cystine bridges form between Cys-24–Cys-122 and Cys-52–Cys-162.

The protein belongs to the alpha/beta interferon family. IFN-alphaII subfamily. In terms of tissue distribution, constitutively and exclusively expressed in the mononuclear cells of the extraembryonic trophectoderm.

It localises to the secreted. Its function is as follows. Paracrine hormone primarily responsible for maternal recognition of pregnancy. Interacts with endometrial receptors, probably type I interferon receptors, and blocks estrogen receptor expression, preventing the estrogen-induced increase in oxytocin receptor expression in the endometrium. This results in the suppression of the pulsatile endometrial release of the luteolytic hormone prostaglandin F2-alpha, hindering the regression of the corpus luteum (luteolysis) and therefore a return to ovarian cyclicity. This, and a possible direct effect of IFN-tau on prostaglandin synthesis, leads in turn to continued ovarian progesterone secretion, which stimulates the secretion by the endometrium of the nutrients required for the growth of the conceptus. In summary, displays particularly high antiviral and antiproliferative potency concurrently with particular weak cytotoxicity, high antiluteolytic activity and immunomodulatory properties. In contrast with other IFNs, IFN-tau is not virally inducible. This chain is Interferon tau-2 (IFNT2), found in Ovis aries (Sheep).